A 264-amino-acid polypeptide reads, in one-letter code: Thymidylate synthase (264 aa).

R21 contributes to the dUMP binding site. H51 contributes to the (6R)-5,10-methylene-5,6,7,8-tetrahydrofolate binding site. 126–127 (RR) serves as a coordination point for dUMP. The Nucleophile role is filled by C146. DUMP-binding positions include 166–169 (RSCD), N177, and 207–209 (HLY). D169 is a binding site for (6R)-5,10-methylene-5,6,7,8-tetrahydrofolate. Residue A263 coordinates (6R)-5,10-methylene-5,6,7,8-tetrahydrofolate.

Belongs to the thymidylate synthase family. Bacterial-type ThyA subfamily. Homodimer.

Its subcellular location is the cytoplasm. It catalyses the reaction dUMP + (6R)-5,10-methylene-5,6,7,8-tetrahydrofolate = 7,8-dihydrofolate + dTMP. It participates in pyrimidine metabolism; dTTP biosynthesis. Its function is as follows. Catalyzes the reductive methylation of 2'-deoxyuridine-5'-monophosphate (dUMP) to 2'-deoxythymidine-5'-monophosphate (dTMP) while utilizing 5,10-methylenetetrahydrofolate (mTHF) as the methyl donor and reductant in the reaction, yielding dihydrofolate (DHF) as a by-product. This enzymatic reaction provides an intracellular de novo source of dTMP, an essential precursor for DNA biosynthesis. This chain is Thymidylate synthase, found in Shewanella denitrificans (strain OS217 / ATCC BAA-1090 / DSM 15013).